A 428-amino-acid polypeptide reads, in one-letter code: Sialidase-3 (428 aa).

The FRIP motif motif lies at 24–27; the sequence is YRIP. Substrate contacts are provided by R25 and R45. D50 (proton acceptor) is an active-site residue. Residues 129–140 form a BNR 1 repeat; sequence ICSQDAGYSWSD. Substrate is bound by residues Y179 and Y181. One copy of the BNR 2 repeat lies at 203-214; that stretch reads IYSDDLGATWHH. Substrate is bound by residues E225 and R245. One copy of the BNR 3 repeat lies at 254–265; it reads ALSIDHGECFQK. Residue S314 is modified to Phosphoserine. R341 contacts substrate. The active-site Nucleophile is the Y371. E388 is a catalytic residue.

The protein belongs to the glycosyl hydrolase 33 family. As to quaternary structure, interacts with CAV1; this interaction enhances NEU3 sialidase activity within caveola. Interacts with EGFR; this interaction mediates desialylation of EGFR and enhances downstream signaling. In terms of processing, palmitoylated; may regulate intracellular trafficking and anchorage to plasma membrane and endomembranes. Expressed in brain.

It is found in the cell membrane. It localises to the membrane. The protein localises to the caveola. The protein resides in the early endosome membrane. Its subcellular location is the recycling endosome membrane. It is found in the lysosome membrane. The catalysed reaction is Hydrolysis of alpha-(2-&gt;3)-, alpha-(2-&gt;6)-, alpha-(2-&gt;8)- glycosidic linkages of terminal sialic acid residues in oligosaccharides, glycoproteins, glycolipids, colominic acid and synthetic substrates.. It catalyses the reaction a ganglioside GD1a + H2O = a ganglioside GM1 + N-acetylneuraminate. It carries out the reaction a ganglioside GD1a (d18:1(4E)) + H2O = a ganglioside GM1 (d18:1(4E)) + N-acetylneuraminate. The enzyme catalyses a ganglioside GD1b + H2O = a ganglioside GM1 + N-acetylneuraminate. The catalysed reaction is a ganglioside GD1b (d18:1(4E)) + H2O = a ganglioside GM1 (d18:1(4E)) + N-acetylneuraminate. It catalyses the reaction a ganglioside GD3 + H2O = a ganglioside GM3 + N-acetylneuraminate. It carries out the reaction a ganglioside GD3 (d18:1(4E)) + H2O = a ganglioside GM3 (d18:1(4E)) + N-acetylneuraminate. The enzyme catalyses a ganglioside GM3 + H2O = a beta-D-galactosyl-(1-&gt;4)-beta-D-glucosyl-(1&lt;-&gt;1)-ceramide + N-acetylneuraminate. The catalysed reaction is a ganglioside GM1 + H2O = a ganglioside GA1 + N-acetylneuraminate. It catalyses the reaction a ganglioside GM1 (d18:1(4E)) + H2O = a ganglioside GA1 (d18:1(4E)) + N-acetylneuraminate. It carries out the reaction a ganglioside GM2 (d18:1(4E)) + H2O = a ganglioside GA2 (d18:1(4E)) + N-acetylneuraminate. The enzyme catalyses a ganglioside GM3 (d18:1(4E)) + H2O = a beta-D-Gal-(1-&gt;4)-beta-D-Glc-(1&lt;-&gt;1)-Cer(d18:1(4E)) + N-acetylneuraminate. The catalysed reaction is a ganglioside GT1b + H2O = a ganglioside GD1b + N-acetylneuraminate. Its function is as follows. Exo-alpha-sialidase that catalyzes the hydrolytic cleavage of the terminal sialic acid (N-acetylneuraminic acid, Neu5Ac) of a glycan moiety in the catabolism of glycolipids, glycoproteins and oligosacharides. Displays high catalytic efficiency for gangliosides including alpha-(2-&gt;3)-sialylated GD1a and GM3 and alpha-(2-&gt;8)-sialylated GD3. Plays a role in the regulation of transmembrane signaling through the modulation of ganglioside content of the lipid bilayer and by direct interaction with signaling receptors, such as EGFR. Desialylates EGFR and activates downstream signaling in proliferating cells. Contributes to clathrin-mediated endocytosis by regulating sorting of endocytosed receptors to early and recycling endosomes. This Bos taurus (Bovine) protein is Sialidase-3 (NEU3).